The sequence spans 278 residues: MRSSLLLLVFFLSIGWARYCVHNEKSWCQGHNIWGWCFHNKSSGVFNCDDNAFCVSQEQLKNKKSSGCFLRDNSSICCCNDADGCNLGFIGVQPKYAHGQQCTNSMEVPNEDIRQFRPCDDPFCYSVLTAEDDGGPTTVTRGCHSRKMVMHHMSKNEDDKYQNNTKWRETKQIAEMPSCAEILKDQPKVNGTTSMCVDFTYDQEAEDGEEVDEPIKMKGRLCCCAGSNKCNEHAMWADEGISLTEMLEEIEARKVPVDSSAPVNIILSIAFSIFLIHF.

The first 17 residues, Met1–Ala17, serve as a signal peptide directing secretion. Topologically, residues Arg18–Lys254 are extracellular. N-linked (GlcNAc...) asparagine glycans are attached at residues Asn40, Asn73, Asn163, and Asn190. A helical membrane pass occupies residues Val255–Phe271. Residues Ser272–Phe278 lie on the Cytoplasmic side of the membrane.

Its subcellular location is the cell membrane. Functionally, plays a role in mechanosensory transduction (touch sensitivity). The chain is Protein mtd-1 from Caenorhabditis elegans.